Here is a 233-residue protein sequence, read N- to C-terminus: Sugar fermentation stimulation protein homolog (233 aa).

This sequence belongs to the SfsA family.

In Rhodospirillum centenum (strain ATCC 51521 / SW), this protein is Sugar fermentation stimulation protein homolog.